The chain runs to 96 residues: Co-chaperonin GroES (96 aa).

This sequence belongs to the GroES chaperonin family. Heptamer of 7 subunits arranged in a ring. Interacts with the chaperonin GroEL.

Its subcellular location is the cytoplasm. Functionally, together with the chaperonin GroEL, plays an essential role in assisting protein folding. The GroEL-GroES system forms a nano-cage that allows encapsulation of the non-native substrate proteins and provides a physical environment optimized to promote and accelerate protein folding. GroES binds to the apical surface of the GroEL ring, thereby capping the opening of the GroEL channel. In Shewanella denitrificans (strain OS217 / ATCC BAA-1090 / DSM 15013), this protein is Co-chaperonin GroES.